The primary structure comprises 66 residues: MPKLKTKSGAKKRFKITGTGKVLYAQAGKRHGMIKRTTKQIRNLRGTTTLFEGDAANVKKFFLPNG.

This sequence belongs to the bacterial ribosomal protein bL35 family.

In Methylobacterium nodulans (strain LMG 21967 / CNCM I-2342 / ORS 2060), this protein is Large ribosomal subunit protein bL35.